Consider the following 395-residue polypeptide: Xylose isomerase (395 aa).

Catalysis depends on residues histidine 54 and aspartate 57. Positions 181, 217, 220, 245, 255, 257, and 293 each coordinate Mg(2+).

The protein belongs to the xylose isomerase family. As to quaternary structure, homotetramer. Mg(2+) is required as a cofactor.

The protein localises to the cytoplasm. The enzyme catalyses alpha-D-xylose = alpha-D-xylulofuranose. The sequence is that of Xylose isomerase from Pseudarthrobacter chlorophenolicus (strain ATCC 700700 / DSM 12829 / CIP 107037 / JCM 12360 / KCTC 9906 / NCIMB 13794 / A6) (Arthrobacter chlorophenolicus).